The sequence spans 106 residues: A-type ATP synthase subunit F (106 aa).

The protein belongs to the V-ATPase F subunit family. As to quaternary structure, has multiple subunits with at least A(3), B(3), C, D, E, F, H, I and proteolipid K(x).

It localises to the cell membrane. Its function is as follows. Component of the A-type ATP synthase that produces ATP from ADP in the presence of a proton gradient across the membrane. The polypeptide is A-type ATP synthase subunit F (Methanosphaera stadtmanae (strain ATCC 43021 / DSM 3091 / JCM 11832 / MCB-3)).